Reading from the N-terminus, the 554-residue chain is Glutamine--tRNA ligase (554 aa).

The 'HIGH' region signature appears at 34 to 44; it reads PEPNGYLHIGH. ATP-binding positions include 35–37 and 41–47; these read EPN and HIGHAKS. The L-glutamine site is built by Asp-67 and Tyr-212. ATP-binding positions include Thr-231, 261–262, and 269–271; these read RL and MSK. The 'KMSKS' region motif lies at 268–272; the sequence is VMSKR. Positions 317–324 are interaction with tRNA; the sequence is TKQDNTIE.

This sequence belongs to the class-I aminoacyl-tRNA synthetase family. In terms of assembly, monomer.

The protein resides in the cytoplasm. It carries out the reaction tRNA(Gln) + L-glutamine + ATP = L-glutaminyl-tRNA(Gln) + AMP + diphosphate. This chain is Glutamine--tRNA ligase, found in Escherichia coli (strain 55989 / EAEC).